The chain runs to 88 residues: Putative membrane protein insertion efficiency factor (88 aa).

The tract at residues 66–88 (DFVPPKKDKNADSEHSCKAHHHH) is disordered. Basic and acidic residues predominate over residues 69–82 (PPKKDKNADSEHSC).

Belongs to the UPF0161 family.

Its subcellular location is the cell membrane. Could be involved in insertion of integral membrane proteins into the membrane. This chain is Putative membrane protein insertion efficiency factor, found in Listeria monocytogenes serotype 4a (strain HCC23).